Reading from the N-terminus, the 226-residue chain is Enolase-phosphatase E1 (226 aa).

The Mg(2+) site is built by Asp-9 and Glu-11. Substrate contacts are provided by residues 115 to 116 and Lys-160; that span reads SS. Asp-185 lines the Mg(2+) pocket.

Belongs to the HAD-like hydrolase superfamily. MasA/MtnC family. In terms of assembly, monomer. The cofactor is Mg(2+).

It is found in the cytoplasm. The protein localises to the nucleus. It carries out the reaction 5-methylsulfanyl-2,3-dioxopentyl phosphate + H2O = 1,2-dihydroxy-5-(methylsulfanyl)pent-1-en-3-one + phosphate. It participates in amino-acid biosynthesis; L-methionine biosynthesis via salvage pathway; L-methionine from S-methyl-5-thio-alpha-D-ribose 1-phosphate: step 3/6. The protein operates within amino-acid biosynthesis; L-methionine biosynthesis via salvage pathway; L-methionine from S-methyl-5-thio-alpha-D-ribose 1-phosphate: step 4/6. In terms of biological role, bifunctional enzyme that catalyzes the enolization of 2,3-diketo-5-methylthiopentyl-1-phosphate (DK-MTP-1-P) into the intermediate 2-hydroxy-3-keto-5-methylthiopentenyl-1-phosphate (HK-MTPenyl-1-P), which is then dephosphorylated to form the acireductone 1,2-dihydroxy-3-keto-5-methylthiopentene (DHK-MTPene). This is Enolase-phosphatase E1 from Zygosaccharomyces rouxii (strain ATCC 2623 / CBS 732 / NBRC 1130 / NCYC 568 / NRRL Y-229).